The chain runs to 144 residues: Group IID secretory phospholipase A2 (144 aa).

Positions 1–19 (MRLALLCGLLLAGITATQG) are cleaved as a signal peptide. Intrachain disulfides connect cysteine 45/cysteine 137, cysteine 47/cysteine 63, cysteine 62/cysteine 117, cysteine 68/cysteine 144, cysteine 69/cysteine 110, cysteine 78/cysteine 103, and cysteine 96/cysteine 108. 3 residues coordinate Ca(2+): histidine 46, glycine 48, and glycine 50. Residue histidine 66 is part of the active site. Aspartate 67 provides a ligand contact to Ca(2+). An N-linked (GlcNAc...) asparagine glycan is attached at asparagine 99. Residue aspartate 111 is part of the active site.

Belongs to the phospholipase A2 family. The cofactor is Ca(2+). In terms of tissue distribution, highly expressed in secondary lymphoid tissues, spleen and lymph nodes. Expressed at a lesser extent in thymus. Expressed in CD4-positive, IL2RA/CD25-positive, FOXP3-positive Tregs (at protein level). Expressed in myeloid cell subsets resident in spleen and lymph nodes, ITGAX/CD11C-positive dendritic cells and macrophages (at protein level). Enriched in CD4-positive, ITGAM/CD11B-positive dendritic cell subset. Expressed in pulmonary ITGAX/CD11C-positive dendritic cell subset (at protein level).

The protein resides in the secreted. Its subcellular location is the cell membrane. It localises to the cytoplasm. The enzyme catalyses a 1,2-diacyl-sn-glycero-3-phosphoethanolamine + H2O = a 1-acyl-sn-glycero-3-phosphoethanolamine + a fatty acid + H(+). It carries out the reaction 1-hexadecanoyl-2-(9Z-octadecenoyl)-sn-glycero-3-phosphoethanolamine + H2O = 1-hexadecanoyl-sn-glycero-3-phosphoethanolamine + (9Z)-octadecenoate + H(+). The catalysed reaction is 1-hexadecanoyl-2-(9Z,12Z-octadecadienoyl)-sn-glycero-3-phosphoethanolamine + H2O = 1-hexadecanoyl-sn-glycero-3-phosphoethanolamine + (9Z,12Z)-octadecadienoate + H(+). It catalyses the reaction 1,2-dihexadecanoyl-sn-glycero-3-phospho-(1'-sn-glycerol) + H2O = 1-hexadecanoyl-sn-glycero-3-phospho-(1'-sn-glycerol) + hexadecanoate + H(+). The enzyme catalyses 1-hexadecanoyl-2-(9Z-octadecenoyl)-sn-glycero-3-phospho-(1'-sn-glycerol) + H2O = 1-hexadecanoyl-sn-glycero-3-phospho-(1'-sn-glycerol) + (9Z)-octadecenoate + H(+). It carries out the reaction a 1,2-diacyl-sn-glycero-3-phosphocholine + H2O = a 1-acyl-sn-glycero-3-phosphocholine + a fatty acid + H(+). The catalysed reaction is 1,2-dihexadecanoyl-sn-glycero-3-phosphocholine + H2O = 1-hexadecanoyl-sn-glycero-3-phosphocholine + hexadecanoate + H(+). It catalyses the reaction 1-hexadecanoyl-2-(9Z-octadecenoyl)-sn-glycero-3-phosphocholine + H2O = 1-hexadecanoyl-sn-glycero-3-phosphocholine + (9Z)-octadecenoate + H(+). The enzyme catalyses 1-hexadecanoyl-2-(9Z,12Z-octadecadienoyl)-sn-glycero-3-phosphocholine + H2O = (9Z,12Z)-octadecadienoate + 1-hexadecanoyl-sn-glycero-3-phosphocholine + H(+). It carries out the reaction 1-hexadecanoyl-2-(4Z,7Z,10Z,13Z,16Z,19Z-docosahexaenoyl)-sn-glycero-3-phosphocholine + H2O = (4Z,7Z,10Z,13Z,16Z,19Z)-docosahexaenoate + 1-hexadecanoyl-sn-glycero-3-phosphocholine + H(+). Functionally, secretory calcium-dependent phospholipase A2 that primarily targets extracellular lipids, exerting anti-inflammatory and immunosuppressive functions. Hydrolyzes the ester bond of the fatty acyl group attached at sn-2 position of phospholipids (phospholipase A2 activity) with preference for phosphatidylethanolamines and phosphatidylglycerols over phosphatidylcholines. In draining lymph nodes, selectively hydrolyzes diacyl and alkenyl forms of phosphatidylethanolamines, releasing omega-3 polyunsaturated fatty acids (PUFAs) such as eicosapentaenoate and docosahexaenoate that are precursors of the anti-inflammatory lipid mediators, resolvins. During the resolution phase of acute inflammation drives docosahexaenoate-derived resolvin D1 synthesis, which suppresses dendritic cell activation and T-helper 1 immune response. May act in an autocrine and paracrine manner. Via a mechanism independent of its catalytic activity, promotes differentiation of regulatory T cells (Tregs) and participates in the maintenance of immune tolerance. May contribute to lipid remodeling of cellular membranes and generation of lipid mediators involved in pathogen clearance. Displays bactericidal activity against Gram-positive bacteria by directly hydrolyzing phospholipids of the bacterial membrane. The sequence is that of Group IID secretory phospholipase A2 (Pla2g2d) from Mus musculus (Mouse).